Reading from the N-terminus, the 98-residue chain is Putative septation protein SpoVG (98 aa).

It belongs to the SpoVG family.

In terms of biological role, essential for sporulation. Interferes with or is a negative regulator of the pathway leading to asymmetric septation. This Shouchella clausii (strain KSM-K16) (Alkalihalobacillus clausii) protein is Putative septation protein SpoVG.